The chain runs to 337 residues: 2-oxoglutarate receptor 1 (337 aa).

Residues 1–38 are Extracellular-facing; it reads MIEPLDSPASDSDFLDYPSALGNCTDEQISFKMQYLPV. N23 carries an N-linked (GlcNAc...) asparagine glycan. A helical membrane pass occupies residues 39–59; sequence IYSIIFLVGFPGNTVAISIYI. Over 60-69 the chain is Cytoplasmic; that stretch reads FKMRPWRGST. A helical transmembrane segment spans residues 70–90; that stretch reads VIMLNLALTDLLYLTSLPFLI. Residues 91 to 116 lie on the Extracellular side of the membrane; that stretch reads HYYASGENWIFGDFMCKFIRFGFHFN. C106 and C183 are oxidised to a cystine. A helical membrane pass occupies residues 117 to 137; the sequence is LYSSILFLTCFSLFRYVVIIH. Residues 138-151 lie on the Cytoplasmic side of the membrane; it reads PMSCFSIQKTRWAV. Residues 152 to 172 traverse the membrane as a helical segment; that stretch reads VACAGVWVISLVAVMPMTFLI. Topologically, residues 173-200 are extracellular; it reads TSTTRTNRSACLDLTSSDDLTTIKWYNL. The helical transmembrane segment at 201 to 221 threads the bilayer; the sequence is ILTATTFCLPLVIVTLCYTTI. Residues 222–242 lie on the Cytoplasmic side of the membrane; that stretch reads ISTLTHGPRTHSCFKQKARRL. A helical transmembrane segment spans residues 243–263; sequence TILLLLVFYICFLPFHILRVI. Residues 264–284 lie on the Extracellular side of the membrane; the sequence is RIESRLLSISCSIESHIHEAY. A helical membrane pass occupies residues 285 to 305; sequence IVSRPLAALNTFGNLLLYVVV. The Cytoplasmic portion of the chain corresponds to 306-337; it reads SNNFQQAFCSIVRCKASGDLEQGKKDSCSNNP.

The protein belongs to the G-protein coupled receptor 1 family. Predominantly expressed in the kidney with limited expression in the testis and the smooth muscle. Expressed in SLC26A4/pendrin-positive type B and non-A non-B intercalated cells (at protein level).

Its subcellular location is the cell membrane. Its function is as follows. G protein-coupled receptor for dicarboxylates and amino dicarboxylates. Receptor for itaconate produced by activated macrophages upon bacterial infection. In the respiratory epithelium, couples the binding of itaconate to the activation of GNA11 and downstream intracellular Ca(2+) release, leading to mucocilliary clearance of airborne pathogens. Receptor for leukotriene E4 (LTE4) produced by mast cells upon allergic inflammation. Binds with high affinity to LTE4 and elicits mucin release from pulmonary epithelium in response to airborne fungi allergens. Regulates mucin-producing goblet cell homeostasis. Receptor for alpha-ketoglutarate produced by proximal tubule renal cells upon metabolic alkalosis. In an intrarenal paracrine signaling pathway, binds alpha-ketoglutarate and drives transepithelial salt reabsorption and bicarbonate secretion by SLC26A4/pendrin-positive intercalated cells. This chain is 2-oxoglutarate receptor 1 (Oxgr1), found in Mus musculus (Mouse).